A 314-amino-acid chain; its full sequence is Cell division protein FtsQ (314 aa).

2 stretches are compositionally biased toward basic and acidic residues: residues 1–15 (MTEH…RVAD) and 30–57 (ESKD…ERRA). Residues 1 to 57 (MTEHNEDPQIERVADDAADEEAVTEPLATESKDEPAEHPEFEGPRRRARRERAERRA) form a disordered region. Topologically, residues 1–99 (MTEHNEDPQI…AARGVVRGLK (99 aa)) are cytoplasmic. Residues 100 to 120 (ALLATVVLAVVGIGLGLALYF) form a helical membrane-spanning segment. The Extracellular segment spans residues 121 to 314 (TPAMSAREIV…VSSPDLPTVK (194 aa)). Residues 124 to 192 (MSAREIVIIG…SALRITIVER (69 aa)) form the POTRA domain.

This sequence belongs to the FtsQ/DivIB family. FtsQ subfamily.

Its subcellular location is the cell membrane. Essential cell division protein. This chain is Cell division protein FtsQ, found in Mycobacterium bovis (strain ATCC BAA-935 / AF2122/97).